The following is a 206-amino-acid chain: Ribosomal RNA small subunit methyltransferase G (206 aa).

S-adenosyl-L-methionine-binding positions include Gly-71, Phe-76, 122–123, and Arg-135; that span reads AE.

The protein belongs to the methyltransferase superfamily. RNA methyltransferase RsmG family.

The protein localises to the cytoplasm. In terms of biological role, specifically methylates the N7 position of a guanine in 16S rRNA. This Bacteroides thetaiotaomicron (strain ATCC 29148 / DSM 2079 / JCM 5827 / CCUG 10774 / NCTC 10582 / VPI-5482 / E50) protein is Ribosomal RNA small subunit methyltransferase G.